We begin with the raw amino-acid sequence, 577 residues long: Probable cytochrome c biosynthesis protein (577 aa).

It belongs to the CcmF/CycK/Ccl1/NrfE/CcsA family.

The protein localises to the mitochondrion. In terms of biological role, could be involved in assembly and maturation of cytochromes c. May play a role in guidance of apocytochromes and heme groups for the covalent linkage introduced by the cytochrome-c-heme lyase. The chain is Probable cytochrome c biosynthesis protein from Oenothera berteroana (Bertero's evening primrose).